A 240-amino-acid polypeptide reads, in one-letter code: MMKDPLALQLLGEFLGTFILILLGDGVVAGVTLNKSKAQNAGWVAITLGWGFAVTMGVYASSFMSPAHLNPAVSLGMAVAGKFPWAYVIPYSAAQIAGGVIGGLVVWLHYYPHWQATKDAGAILGIFATGPGIRRYFWNFISEVIGTFVLVFGLLAFTKGQFTAGLNPIVVGILIIAIGLSLGGTTGYAINPARDLGPRIAHAVLPIANKGTSDWAYSWVPIAGPLVGGALGALLFNVLP.

2 consecutive transmembrane segments (helical) span residues 11–31 (LGEF…VAGV) and 41–61 (AGWV…VYAS). The NPA 1 signature appears at 70-72 (NPA). Helical transmembrane passes span 88-108 (VIPY…VVWL), 137-157 (FWNF…LLAF), and 162-182 (FTAG…GLSL). The NPA 2 signature appears at 191 to 193 (NPA). The chain crosses the membrane as a helical span at residues 219–239 (WVPIAGPLVGGALGALLFNVL).

Belongs to the MIP/aquaporin (TC 1.A.8) family.

It localises to the cell membrane. Transporter that facilitates the transmembrane diffusion of water, dihydroxyacetone, glycerol and H(2)O(2). Is not permeable to urea and D/L-lactic acid. This is Glycerol uptake facilitator protein 3 from Lactiplantibacillus plantarum (strain ATCC BAA-793 / NCIMB 8826 / WCFS1) (Lactobacillus plantarum).